We begin with the raw amino-acid sequence, 172 residues long: Large ribosomal subunit protein uL10 (172 aa).

This sequence belongs to the universal ribosomal protein uL10 family. In terms of assembly, part of the ribosomal stalk of the 50S ribosomal subunit. The N-terminus interacts with L11 and the large rRNA to form the base of the stalk. The C-terminus forms an elongated spine to which L12 dimers bind in a sequential fashion forming a multimeric L10(L12)X complex.

Forms part of the ribosomal stalk, playing a central role in the interaction of the ribosome with GTP-bound translation factors. In Francisella philomiragia subsp. philomiragia (strain ATCC 25017 / CCUG 19701 / FSC 153 / O#319-036), this protein is Large ribosomal subunit protein uL10.